Here is a 791-residue protein sequence, read N- to C-terminus: DNA repair and recombination protein RAD54-like (791 aa).

The segment covering 1-20 (MRRSLAPSQRIGQSTASRNA) has biased composition (polar residues). The disordered stretch occupies residues 1–53 (MRRSLAPSQRIGQSTASRNAFTPPLLQKKNKRACQKDLRLDTDADEDKERKRF). The tract at residues 2–9 (RRSLAPSQ) is required for chromatin remodeling, strand pairing activities and coupling of ATPase activity. At threonine 22 the chain carries Phosphothreonine. A compositionally biased stretch (basic and acidic residues) spans 34 to 53 (CQKDLRLDTDADEDKERKRF). The Helicase ATP-binding domain occupies 175–349 (EGKKGDFNGC…FSLVNFVNPE (175 aa)). An ATP-binding site is contributed by 188–195 (DEMGLGKT). The short motif at 300–303 (DEGH) is the DEGH box element. The region spanning 506–663 (LLDFMLAAIR…NNESSEKHFT (158 aa)) is the Helicase C-terminal domain. The interval 747–791 (KEVVESPESAAAEAESVEEESQPTQRKRPSPPLSDDSADEDFIGF) is disordered. The segment covering 782–791 (DSADEDFIGF) has biased composition (acidic residues).

Belongs to the SNF2/RAD54 helicase family. Interacts (via N-terminus) with spn-A/Rad51.

It is found in the nucleus. Involved in mitotic DNA repair and meiotic recombination. Functions in the recombinational DNA repair pathway. Essential for interhomolog gene conversion (GC), but may have a less important role in intersister GC than spn-A/Rad51. In the presence of DNA, spn-A/Rad51 enhances the ATPase activity of okr/Rad54. This chain is DNA repair and recombination protein RAD54-like, found in Drosophila ananassae (Fruit fly).